A 498-amino-acid polypeptide reads, in one-letter code: MSMFLGLLFLFPLFFILFKNLLPPRKKLPPGPTGLPLIGNLHQLGRLLHSSLHKLSLEHGPVMLVRWGVVPMAVFSSNEAAKEVLKTHDLETCNRPKLVANGLFTHGYKDIGFTQYGEEWREMKKFVGLELFSPKKHKSFRYIREEEGDLLVKKISNYAQTQTLVDLRKSLFSYTASIIFREAFGQNFRECDYINMDKLEELVQETETNVCSLAFTDFFPRGLGWLVDRISGQHSRMNIAFSKLTTFFEDVIDELLKTKQLDDHSDLVTAMLDVINRPRKFGSLKITYDHLIAMMSDVVLAGVNAGTVTMIWTMTELTRHPRVMKKLQEEIRATLGPNKERITEEDLEKVEYLNLVIKESFRLHPPAPLLLPRETMSDIEIQGYHIPKNAHVKINTYAIGRDPKRWTNPEEFNPERFLNTSINYKGQHYELLPFGAGRRNCPGMTLGITILELGLLNILYYFDWSLPSGMTIKDIDMEEDGALNIAKKVPLQLVPTLP.

A helical membrane pass occupies residues 3-23; it reads MFLGLLFLFPLFFILFKNLLP. Cys-441 is a binding site for heme.

This sequence belongs to the cytochrome P450 family. It depends on heme as a cofactor.

The protein resides in the membrane. The protein is Cytochrome P450 71B31 (CYP71B31) of Arabidopsis thaliana (Mouse-ear cress).